The sequence spans 330 residues: L-asparaginase (330 aa).

Residues 4-330 (PQVTILATGG…EAIQKIFSTY (327 aa)) form the Asparaginase/glutaminase domain. Threonine 14 acts as the O-isoaspartyl threonine intermediate in catalysis. Position 93-94 (93-94 (TD)) interacts with substrate.

This sequence belongs to the asparaginase 1 family. In terms of assembly, homotetramer.

Its subcellular location is the cytoplasm. The catalysed reaction is L-asparagine + H2O = L-aspartate + NH4(+). In Wolinella succinogenes (strain ATCC 29543 / DSM 1740 / CCUG 13145 / JCM 31913 / LMG 7466 / NCTC 11488 / FDC 602W) (Vibrio succinogenes), this protein is L-asparaginase (ansA).